The chain runs to 197 residues: Protein Hikeshi (197 aa).

The segment at 18 to 55 (VAEDKFVFDLPDYENINHVVVFMLGTIPFPEGMGGSVY) is required for F-X-F-G repeats-nucleoporins recognition and nuclear import. The tract at residues 124–134 (QTPVGSAAVSS) is flexible linker region involved in nuclear import of HSP70 proteins.

It belongs to the OPI10 family. In terms of assembly, forms an asymmetric homodimer; required for binding and nuclear import of HSP70 proteins. Interacts with ATP-bound HSP70 proteins. Interacts with NUP62 and NUP153 (via F-X-F-G repeats). Interacts with HSPA8. In terms of tissue distribution, expressed in the central white matter of newborn and adult brain, particularly in regions where oligodendrocytes are generated.

The protein resides in the cytoplasm. The protein localises to the cytosol. It is found in the nucleus. Functionally, acts as a specific nuclear import carrier for HSP70 proteins following heat-shock stress: acts by mediating the nucleoporin-dependent translocation of ATP-bound HSP70 proteins into the nucleus. HSP70 proteins import is required to protect cells from heat shock damages. Does not translocate ADP-bound HSP70 proteins into the nucleus. May also be indirectly required for organization and/or function of the secretory apparatus in Club cells in lung. The polypeptide is Protein Hikeshi (Mus musculus (Mouse)).